Consider the following 32-residue polypeptide: MWSGLFPDLQGTAFFRAWVASARFRVFHGEGA.

This is an uncharacterized protein from Treponema pallidum (strain Nichols).